Consider the following 378-residue polypeptide: Probable S-(hydroxymethyl)glutathione dehydrogenase 1 (378 aa).

Residue C47 coordinates Zn(2+). H48 serves as a coordination point for NAD(+). The Zn(2+) site is built by H69, E70, C99, C102, C105, C113, and C176. Residues 201-206 (GCGCVG), D225, 293-295 (IGV), and 318-320 (SAF) each bind NAD(+).

This sequence belongs to the zinc-containing alcohol dehydrogenase family. Class-III subfamily. Zn(2+) serves as cofactor.

It catalyses the reaction a primary alcohol + NAD(+) = an aldehyde + NADH + H(+). The enzyme catalyses a secondary alcohol + NAD(+) = a ketone + NADH + H(+). The catalysed reaction is S-(hydroxymethyl)glutathione + NADP(+) = S-formylglutathione + NADPH + H(+). It carries out the reaction S-(hydroxymethyl)glutathione + NAD(+) = S-formylglutathione + NADH + H(+). It catalyses the reaction S-nitrosoglutathione + NADH + H(+) = S-(hydroxysulfenamide)glutathione + NAD(+). Its function is as follows. Oxidizes long-chain alcohols and, in the presence of glutathione, is able to oxidize formaldehyde. Also acts as a S-nitroso-glutathione reductase by catalyzing the NADH-dependent reduction of S-nitrosoglutathione, thereby regulating protein S-nitrosylation. In Schizosaccharomyces pombe (strain 972 / ATCC 24843) (Fission yeast), this protein is Probable S-(hydroxymethyl)glutathione dehydrogenase 1.